We begin with the raw amino-acid sequence, 294 residues long: MLKGAITALITPFDHKGAIDERAFCDFVEWQITQGINGVSPVGTTGESATLSHEEHKQIIELCVEQVAKRVPVVAGAGSNSTSEAIELAQHAEKAGADAVLVVTPYYNRPNQSGLYKHFSSIAKAVSIPIIIYNIPGRSVIDMAVETMRDLYQNFNNIIGVKDATSRIERVSEQGEKCGKDFVQLSGDDCTALGFNAHGGVGCISVSSNVAPKLCAELQAACFHGDYKTARELNDRLMPLNRAVFIEPSPAGIKYAAAKLGLCGETVRSPIVPLTESTKKIIDEALSHAGLLKA.

T45 contacts pyruvate. Catalysis depends on Y133, which acts as the Proton donor/acceptor. K162 acts as the Schiff-base intermediate with substrate in catalysis. Position 204 (I204) interacts with pyruvate.

Belongs to the DapA family. In terms of assembly, homotetramer; dimer of dimers.

The protein resides in the cytoplasm. The catalysed reaction is L-aspartate 4-semialdehyde + pyruvate = (2S,4S)-4-hydroxy-2,3,4,5-tetrahydrodipicolinate + H2O + H(+). It participates in amino-acid biosynthesis; L-lysine biosynthesis via DAP pathway; (S)-tetrahydrodipicolinate from L-aspartate: step 3/4. In terms of biological role, catalyzes the condensation of (S)-aspartate-beta-semialdehyde [(S)-ASA] and pyruvate to 4-hydroxy-tetrahydrodipicolinate (HTPA). The polypeptide is 4-hydroxy-tetrahydrodipicolinate synthase (Bartonella tribocorum (strain CIP 105476 / IBS 506)).